A 551-amino-acid chain; its full sequence is Membrane protein insertase YidC (551 aa).

Residues 3 to 23 (ANHIRILLLVTIAIMFISLMG) traverse the membrane as a helical segment. Residues 33 to 55 (NTKQQTSATQNNSHYDNADSSTN) form a disordered region. 3 helical membrane-spanning segments follow: residues 361–381 (LVGNWGLAIILVTCLIKLIFY), 431–451 (LSGCLPMLIQIPIFISLYWVL), and 504–524 (VMMFLPVIFTFLFASFPSGLV).

It belongs to the OXA1/ALB3/YidC family. Type 1 subfamily. Interacts with the Sec translocase complex via SecD. Specifically interacts with transmembrane segments of nascent integral membrane proteins during membrane integration.

Its subcellular location is the cell inner membrane. Required for the insertion and/or proper folding and/or complex formation of integral membrane proteins into the membrane. Involved in integration of membrane proteins that insert both dependently and independently of the Sec translocase complex, as well as at least some lipoproteins. Aids folding of multispanning membrane proteins. The chain is Membrane protein insertase YidC from Francisella tularensis subsp. holarctica (strain OSU18).